The following is a 537-amino-acid chain: uncharacterized protein (537 aa).

Residues 10 to 56 (HHDVEPQNVEEEPPLTGQTIVTEDKLETSAKDKKHESPSMSEDEEGS) form a disordered region. Positions 31-46 (TEDKLETSAKDKKHES) are enriched in basic and acidic residues. The next 12 membrane-spanning stretches (helical) occupy residues 90-110 (FVAT…TACI), 133-153 (LFIV…DIFG), 156-176 (WVYV…ALAY), 180-200 (MMAI…ANVA), 213-233 (GFGI…GSPI), 243-263 (WFYW…VLCP), 313-333 (PIIM…FLYL), 348-368 (YMGA…VVML), 393-413 (FLIS…FAFT), 422-442 (SPLI…LAMI), 457-477 (IAAF…LGII), and 492-512 (AFIS…GHLI).

It belongs to the major facilitator superfamily. CAR1 family.

The protein localises to the endoplasmic reticulum. The protein resides in the golgi apparatus. Its subcellular location is the membrane. This is an uncharacterized protein from Schizosaccharomyces pombe (strain 972 / ATCC 24843) (Fission yeast).